We begin with the raw amino-acid sequence, 274 residues long: Methylamine utilization protein MauF (274 aa).

A run of 7 helical transmembrane segments spans residues 30–50 (WTRA…ALAM), 52–72 (AAHV…LSTW), 105–125 (LGYA…GGIA), 127–147 (LSGF…LAYG), 176–196 (WVVG…YVQT), 202–222 (VTAA…IAIF), and 253–273 (AAIA…MLAL).

It localises to the cell membrane. It functions in the pathway one-carbon metabolism; methylamine degradation. The polypeptide is Methylamine utilization protein MauF (mauF) (Paracoccus versutus (Thiobacillus versutus)).